Consider the following 177-residue polypeptide: Probable phospholipid hydroperoxide glutathione peroxidase (177 aa).

C42 is an active-site residue.

This sequence belongs to the glutathione peroxidase family.

It localises to the cytoplasm. The catalysed reaction is a hydroperoxy polyunsaturated fatty acid + 2 glutathione = a hydroxy polyunsaturated fatty acid + glutathione disulfide + H2O. In terms of biological role, protects cells and enzymes from oxidative damage, by catalyzing the reduction of hydrogen peroxide, lipid peroxides and organic hydroperoxide, by glutathione. This Encephalitozoon cuniculi (strain GB-M1) (Microsporidian parasite) protein is Probable phospholipid hydroperoxide glutathione peroxidase.